The sequence spans 104 residues: Transcription initiation factor IIA subunit 2 (104 aa).

Belongs to the TFIIA subunit 2 family. TFIIA is a heterodimer of the large unprocessed subunit 1 and a small subunit gamma.

The protein resides in the nucleus. Its function is as follows. TFIIA is a component of the transcription machinery of RNA polymerase II and plays an important role in transcriptional activation. TFIIA in a complex with TBP mediates transcriptional activity. In Schistosoma mansoni (Blood fluke), this protein is Transcription initiation factor IIA subunit 2.